A 108-amino-acid chain; its full sequence is uncharacterized protein (108 aa).

A signal peptide spans 1–21 (MFRSLFLAAALMAFTPLAANA).

The protein to E.coli YaaX.

This is an uncharacterized protein from Escherichia coli O157:H7.